We begin with the raw amino-acid sequence, 37 residues long: Cytochrome b6-f complex subunit 5 (37 aa).

A helical membrane pass occupies residues 5–25 (LLSGIVLGLVPVTIAGLFVTA).

Belongs to the PetG family. In terms of assembly, the 4 large subunits of the cytochrome b6-f complex are cytochrome b6, subunit IV (17 kDa polypeptide, PetD), cytochrome f and the Rieske protein, while the 4 small subunits are PetG, PetL, PetM and PetN. The complex functions as a dimer.

Its subcellular location is the plastid. It is found in the chloroplast thylakoid membrane. Functionally, component of the cytochrome b6-f complex, which mediates electron transfer between photosystem II (PSII) and photosystem I (PSI), cyclic electron flow around PSI, and state transitions. PetG is required for either the stability or assembly of the cytochrome b6-f complex. This chain is Cytochrome b6-f complex subunit 5, found in Chlorella vulgaris (Green alga).